The sequence spans 249 residues: ATP synthase subunit a, chloroplastic (249 aa).

Helical transmembrane passes span 40-60 (QVLITSWVVIAILLGSAVLVV), 97-117 (VPFIGTLFLFIFVSNWSGALL), 136-156 (INTTVALALLTSVAYFYAGLS), 201-221 (LVVVVLVSLVPLVVPIPVMFL), and 222-242 (GLFTSGIQALIFATLAAAYIG).

This sequence belongs to the ATPase A chain family. As to quaternary structure, F-type ATPases have 2 components, CF(1) - the catalytic core - and CF(0) - the membrane proton channel. CF(1) has five subunits: alpha(3), beta(3), gamma(1), delta(1), epsilon(1). CF(0) has four main subunits: a, b, b' and c.

Its subcellular location is the plastid. It localises to the chloroplast thylakoid membrane. Functionally, key component of the proton channel; it plays a direct role in the translocation of protons across the membrane. This is ATP synthase subunit a, chloroplastic from Aethionema grandiflorum (Persian stone-cress).